Reading from the N-terminus, the 291-residue chain is Pantothenate synthetase (291 aa).

33–40 (MGALHEGH) contributes to the ATP binding site. Histidine 40 acts as the Proton donor in catalysis. Glutamine 64 contributes to the (R)-pantoate binding site. Position 64 (glutamine 64) interacts with beta-alanine. Residue 157-160 (GEKD) participates in ATP binding. Glutamine 163 contacts (R)-pantoate. Residues valine 186 and 194-197 (LSSR) each bind ATP.

This sequence belongs to the pantothenate synthetase family. As to quaternary structure, homodimer.

It is found in the cytoplasm. The catalysed reaction is (R)-pantoate + beta-alanine + ATP = (R)-pantothenate + AMP + diphosphate + H(+). Its pathway is cofactor biosynthesis; (R)-pantothenate biosynthesis; (R)-pantothenate from (R)-pantoate and beta-alanine: step 1/1. In terms of biological role, catalyzes the condensation of pantoate with beta-alanine in an ATP-dependent reaction via a pantoyl-adenylate intermediate. The sequence is that of Pantothenate synthetase from Rubrobacter xylanophilus (strain DSM 9941 / JCM 11954 / NBRC 16129 / PRD-1).